A 326-amino-acid polypeptide reads, in one-letter code: ATP-dependent 6-phosphofructokinase 2 (326 aa).

Gly14 contributes to the ATP binding site. Residue 24-28 participates in ADP binding; that stretch reads RAVTR. ATP-binding positions include 75 to 76 and 105 to 108; these read RC and GDGS. Asp106 is a binding site for Mg(2+). Residue 129–131 participates in substrate binding; that stretch reads TID. The active-site Proton acceptor is the Asp131. Arg158 contributes to the ADP binding site. Residues Arg166 and 173 to 175 contribute to the substrate site; that span reads MGR. Residues 189 to 191, Lys215, and 217 to 219 contribute to the ADP site; these read GAE and KNS. Substrate contacts are provided by residues Glu226, Arg250, and 256–259; that span reads HLQR.

It belongs to the phosphofructokinase type A (PFKA) family. ATP-dependent PFK group I subfamily. Prokaryotic clade 'B1' sub-subfamily. As to quaternary structure, homotetramer. Mg(2+) is required as a cofactor.

The protein localises to the cytoplasm. The catalysed reaction is beta-D-fructose 6-phosphate + ATP = beta-D-fructose 1,6-bisphosphate + ADP + H(+). It participates in carbohydrate degradation; glycolysis; D-glyceraldehyde 3-phosphate and glycerone phosphate from D-glucose: step 3/4. Allosterically activated by ADP and other diphosphonucleosides, and allosterically inhibited by phosphoenolpyruvate. In terms of biological role, catalyzes the phosphorylation of D-fructose 6-phosphate to fructose 1,6-bisphosphate by ATP, the first committing step of glycolysis. The sequence is that of ATP-dependent 6-phosphofructokinase 2 from Bacteroides thetaiotaomicron (strain ATCC 29148 / DSM 2079 / JCM 5827 / CCUG 10774 / NCTC 10582 / VPI-5482 / E50).